A 96-amino-acid chain; its full sequence is UPF0235 protein Pfl01_5322 (96 aa).

It belongs to the UPF0235 family.

This is UPF0235 protein Pfl01_5322 from Pseudomonas fluorescens (strain Pf0-1).